A 345-amino-acid chain; its full sequence is MLSPSSSTVPAFGLHKLPHLVSDKVVKSMVPMELFTYSMVAEETKALVKRLFKKVSFQVSIFVQEQDYSVSFGQIGGAISNLGCEVLSQESEQVNGTQIWKMDENTEVQMEHYYDGQICRSYWKMKKETEAILKVLDYLRSVFNVKEVSVSFSIDEKYDAVEFLKSVKNRGVQLKNVNITGFEVTLEAEAYKNLLNECTETSELNVAPHVNWGFEYPVSNFSNFCQKFLTIEHAHWVTVHHLKSLRNCASVTLNNSKLTNQNLNWFLREWMEMSGASLRNVDLEVKQLDLPRIINGLKWTIKEGIISGFGGFQKLPPGDCFEIQRIDGVKATISRIGERFLMTRD.

Positions 11–55 (AFGLHKLPHLVSDKVVKSMVPMELFTYSMVAEETKALVKRLFKKV) constitute an F-box domain.

Functionally, may have a role in embryogenesis. The chain is Skn-1 dependent zygotic transcript 15 protein (sdz-15) from Caenorhabditis elegans.